The following is a 208-amino-acid chain: MIGLIGKKIGMTQIFNEVGHLMPVTVIQVEPNTVVALKDKEKFGYSSVVLGLGELKEKHTSKPYAGQFSGDIKPLKLLKEFRDFDKEVAVGDKLGVEAFEKVSYLDITAISKGKGFQGVMKRWGYGGGRASHGSKFHREAGSTGHCTTPGRSFKNTTMPGRMGFDKVTVQNLQIVKIDPELGVIMVRGSVPGKKDATVFLKSAVKRAK.

The segment at 134 to 159 is disordered; it reads SKFHREAGSTGHCTTPGRSFKNTTMP. The segment covering 144-158 has biased composition (polar residues); that stretch reads GHCTTPGRSFKNTTM.

This sequence belongs to the universal ribosomal protein uL3 family. In terms of assembly, part of the 50S ribosomal subunit. Forms a cluster with proteins L14 and L19.

Its function is as follows. One of the primary rRNA binding proteins, it binds directly near the 3'-end of the 23S rRNA, where it nucleates assembly of the 50S subunit. The sequence is that of Large ribosomal subunit protein uL3 from Treponema denticola (strain ATCC 35405 / DSM 14222 / CIP 103919 / JCM 8153 / KCTC 15104).